A 188-amino-acid chain; its full sequence is Preprocaerulein type-1 (188 aa).

Positions 1 to 26 (MFKGILLCVLFAVLSANPLSQPEGFA) are cleaved as a signal peptide. A propeptide spanning residues 27–170 (DEERDVRGLA…ANDERRFADG (144 aa)) is cleaved from the precursor. Residues 152–188 (LGGSPQQREANDERRFADGQQDYTGWMDFGRRNGEDD) form a disordered region. Residue Tyr-174 is modified to Sulfotyrosine. A Phenylalanine amide modification is found at Phe-180. A propeptide spanning residues 184–188 (NGEDD) is cleaved from the precursor.

This sequence belongs to the gastrin/cholecystokinin family. Expressed by the skin glands.

It localises to the secreted. Functionally, the pharmacological activities of caerulein are quite similar to the physiological activities of gastrin and related peptides. The sequence is that of Preprocaerulein type-1 from Xenopus laevis (African clawed frog).